We begin with the raw amino-acid sequence, 264 residues long: Cell division protein FtsQ (264 aa).

Residues 1–24 form a disordered region; the sequence is MAGPTTAERGDRQQESSGPPPARW. Residues 1–31 lie on the Cytoplasmic side of the membrane; that stretch reads MAGPTTAERGDRQQESSGPPPARWSGTRRLR. Residues 32–52 form a helical membrane-spanning segment; the sequence is ALVVLAALLVLLAGGCAWLLY. The Extracellular portion of the chain corresponds to 53-264; that stretch reads GSSWLRLERV…VPTAPASSGS (212 aa). A POTRA domain is found at 57-126; the sequence is LRLERVSVSG…HGIGLKVTER (70 aa).

Belongs to the FtsQ/DivIB family. FtsQ subfamily.

It localises to the cell membrane. Functionally, essential cell division protein. The chain is Cell division protein FtsQ from Streptomyces collinus.